Here is a 161-residue protein sequence, read N- to C-terminus: Inner membrane assembly complex subunit 17 (161 aa).

The N-terminal 22 residues, 1-22 (MLNPRPCVPRLLSAVARCHKPY), are a transit peptide targeting the mitochondrion. The Mitochondrial matrix portion of the chain corresponds to 23–84 (STSIKSLEDL…QQQQQALKKF (62 aa)). The chain crosses the membrane as a helical span at residues 85–107 (VRPMWIFLLMSSFFYLTGHYIWW). Residues 108–161 (KLEYDEREIELHKQVQALRQELDSAIAAKHSGKEPALSGAGAKKPKRWYLAWLW) are Mitochondrial intermembrane-facing. A coiled-coil region spans residues 109-138 (LEYDEREIELHKQVQALRQELDSAIAAKHS).

This sequence belongs to the INA17 family. Component of the inner membrane assembly (INA) complex, composed of INA17 and INA22. Interacts with a subset of F(1)F(0)-ATP synthase subunits of the F(1)-domain and the peripheral stalk.

It localises to the mitochondrion inner membrane. Functionally, component of the INA complex (INAC) that promotes the biogenesis of mitochondrial F(1)F(0)-ATP synthase. INAC facilitates the assembly of the peripheral stalk and promotes the assembly of the catalytic F(1)-domain with the membrane-embedded F(0)-domain. The polypeptide is Inner membrane assembly complex subunit 17 (Lachancea thermotolerans (strain ATCC 56472 / CBS 6340 / NRRL Y-8284) (Yeast)).